A 397-amino-acid chain; its full sequence is Arginine biosynthesis bifunctional protein ArgJ (397 aa).

Residues threonine 147, lysine 173, threonine 184, glutamate 270, asparagine 392, and threonine 397 each coordinate substrate. Threonine 184 serves as the catalytic Nucleophile.

Belongs to the ArgJ family. In terms of assembly, heterotetramer of two alpha and two beta chains.

It localises to the cytoplasm. The catalysed reaction is N(2)-acetyl-L-ornithine + L-glutamate = N-acetyl-L-glutamate + L-ornithine. It carries out the reaction L-glutamate + acetyl-CoA = N-acetyl-L-glutamate + CoA + H(+). It participates in amino-acid biosynthesis; L-arginine biosynthesis; L-ornithine and N-acetyl-L-glutamate from L-glutamate and N(2)-acetyl-L-ornithine (cyclic): step 1/1. It functions in the pathway amino-acid biosynthesis; L-arginine biosynthesis; N(2)-acetyl-L-ornithine from L-glutamate: step 1/4. Catalyzes two activities which are involved in the cyclic version of arginine biosynthesis: the synthesis of N-acetylglutamate from glutamate and acetyl-CoA as the acetyl donor, and of ornithine by transacetylation between N(2)-acetylornithine and glutamate. This Streptococcus mutans serotype c (strain ATCC 700610 / UA159) protein is Arginine biosynthesis bifunctional protein ArgJ.